A 105-amino-acid polypeptide reads, in one-letter code: Large ribosomal subunit protein uL24 (105 aa).

It belongs to the universal ribosomal protein uL24 family. As to quaternary structure, part of the 50S ribosomal subunit.

One of two assembly initiator proteins, it binds directly to the 5'-end of the 23S rRNA, where it nucleates assembly of the 50S subunit. Its function is as follows. One of the proteins that surrounds the polypeptide exit tunnel on the outside of the subunit. The chain is Large ribosomal subunit protein uL24 from Azoarcus sp. (strain BH72).